A 293-amino-acid chain; its full sequence is Large ribosomal RNA subunit accumulation protein YCED homolog 1, chloroplastic (293 aa).

A chloroplast-targeting transit peptide spans 1–42 (MYYPQPTVSLAAAVALLRPSLRRHSQRASSLLRSSTPPPWVS).

It belongs to the DUF177 domain family. In terms of tissue distribution, highly expressed in shoots and leaves. Detected in roots, embryos and endosperm.

Its subcellular location is the plastid. It localises to the chloroplast. Functionally, plays a role in synthesis, processing and/or stability of 23S rRNA. Required for embryogenesis. May be involved in RPL23 transcript levels regulation in non-photosynthetic plastids. This Zea mays (Maize) protein is Large ribosomal RNA subunit accumulation protein YCED homolog 1, chloroplastic.